We begin with the raw amino-acid sequence, 346 residues long: Phosphoribosylformylglycinamidine cyclo-ligase (346 aa).

Belongs to the AIR synthase family.

It is found in the cytoplasm. The catalysed reaction is 2-formamido-N(1)-(5-O-phospho-beta-D-ribosyl)acetamidine + ATP = 5-amino-1-(5-phospho-beta-D-ribosyl)imidazole + ADP + phosphate + H(+). The protein operates within purine metabolism; IMP biosynthesis via de novo pathway; 5-amino-1-(5-phospho-D-ribosyl)imidazole from N(2)-formyl-N(1)-(5-phospho-D-ribosyl)glycinamide: step 2/2. In Bacillus cereus (strain AH187), this protein is Phosphoribosylformylglycinamidine cyclo-ligase.